A 378-amino-acid chain; its full sequence is Poly(3-hydroxyalkanoate) polymerase subunit PhaC (378 aa).

The 273-residue stretch at 84–356 (PVLIVYALVN…QSFPVGHIGM (273 aa)) folds into the AB hydrolase-1 domain.

It belongs to the PHA/PHB synthase family. Type III PhaC subfamily. In terms of assembly, forms a heterodimer with PhaE, which may multimerize in the presence of 3-hydroxybutyryl-CoA. Both subunits are required for PHB synthesis in E.coli and in PHA-negative A.eutrophus.

It localises to the cytoplasm. The catalysed reaction is (3R)-3-hydroxybutanoyl-CoA + [(3R)-hydroxybutanoate](n) = [(3R)-hydroxybutanoate](n+1) + CoA. The protein operates within biopolymer metabolism; poly-(R)-3-hydroxybutanoate biosynthesis. In terms of biological role, when expressed in E.coli with Synechocystis PhaE and C.necator PhaA and PhaB, confers the ability to synthesize up to 13% (w/w) poly(3-hydroxybutyrate) (PHB) depending on the carbon source; all 4 genes are necessary for PHB production. Cell-free in vitro coexpression with PhaE gives a heterodimer able to polymerize 3-hydroxybutyrate-CoA. The polypeptide is Poly(3-hydroxyalkanoate) polymerase subunit PhaC (Synechocystis sp. (strain ATCC 27184 / PCC 6803 / Kazusa)).